The sequence spans 673 residues: MSKMFKLNSAFRPSGDQPEAIRRLKEGLEDGLAHQTLLGVTGSGKTFTVANVIADLQRPTMVLAPNKTLAAQLYGEMKEFFPDNAVEYFVSYYDYYQPEAYVPSSDTFIEKDASVNEHIEQMRLSATKALLERRDVIVVASVSAIYGLGDPDLYLKMMLHLTNGMIIDQRAILRRLAELQYARNDQAFQRGTFRVRGEVIDIFPAESDDLALRVELFDEEVERLSLFDPLTGHVDSVIQRFTVYPKTHYVTPRERIVQAMEDIKVELAERRKVLLENNKLLEEQRLSQRTQFDLEMMNELGYCSGIENYSRYLSGRGPGEAPPTLFDYLPADGLLVVDESHVTIPQIGGMYRGDRARKETLVEYGFRLPSALDNRPMKFEEFEALAPQTIYVSATPGNYELEKSGEDVVDQVVRPTGLLDPIIEVRPVGTQVDDLLSEIRARAIINERVLVTTLTKRMAEDLTEYLEEHGERVRYLHSDIDTVERMEIIRDLRLGEFDVLVGINLLREGLDMPEVSLVAILDADKEGFLRSERSLIQTIGRAARNINGKAILYGDRITASMAKAISETERRREKQHQYNLDNGIVPQGLNKKVVDILALGQGLAKTKAKGRGKSRSPVEADPVELVLTPKALQQKIHELEGLMMQHAQNLEFEEAAQVRDQLHQLRQLFIAAS.

The Helicase ATP-binding domain maps to 26–183 (EGLEDGLAHQ…RRLAELQYAR (158 aa)). 39 to 46 (GVTGSGKT) is an ATP binding site. Positions 92–115 (YYDYYQPEAYVPSSDTFIEKDASV) match the Beta-hairpin motif. The region spanning 431–597 (QVDDLLSEIR…GLNKKVVDIL (167 aa)) is the Helicase C-terminal domain. Residues 633-668 (QQKIHELEGLMMQHAQNLEFEEAAQVRDQLHQLRQL) form the UVR domain.

The protein belongs to the UvrB family. Forms a heterotetramer with UvrA during the search for lesions. Interacts with UvrC in an incision complex.

It localises to the cytoplasm. The UvrABC repair system catalyzes the recognition and processing of DNA lesions. A damage recognition complex composed of 2 UvrA and 2 UvrB subunits scans DNA for abnormalities. Upon binding of the UvrA(2)B(2) complex to a putative damaged site, the DNA wraps around one UvrB monomer. DNA wrap is dependent on ATP binding by UvrB and probably causes local melting of the DNA helix, facilitating insertion of UvrB beta-hairpin between the DNA strands. Then UvrB probes one DNA strand for the presence of a lesion. If a lesion is found the UvrA subunits dissociate and the UvrB-DNA preincision complex is formed. This complex is subsequently bound by UvrC and the second UvrB is released. If no lesion is found, the DNA wraps around the other UvrB subunit that will check the other stand for damage. The sequence is that of UvrABC system protein B from Enterobacter sp. (strain 638).